A 398-amino-acid polypeptide reads, in one-letter code: Acetate kinase (398 aa).

Residue N9 participates in Mg(2+) binding. ATP is bound at residue K16. R90 is a binding site for substrate. The active-site Proton donor/acceptor is the D147. ATP contacts are provided by residues 207 to 211 (HIGNG), 282 to 284 (DLR), and 330 to 334 (GVGEN). E384 contacts Mg(2+).

Belongs to the acetokinase family. As to quaternary structure, homodimer. The cofactor is Mg(2+). Requires Mn(2+) as cofactor.

The protein localises to the cytoplasm. It carries out the reaction acetate + ATP = acetyl phosphate + ADP. The protein operates within metabolic intermediate biosynthesis; acetyl-CoA biosynthesis; acetyl-CoA from acetate: step 1/2. Catalyzes the formation of acetyl phosphate from acetate and ATP. Can also catalyze the reverse reaction. The chain is Acetate kinase from Staphylococcus carnosus (strain TM300).